A 403-amino-acid chain; its full sequence is Prostaglandin E2 receptor EP1 subtype (403 aa).

Residues 1–38 lie on the Extracellular side of the membrane; that stretch reads MSLCGPLNLSLAGEATPCAEPGAPNASAWPPSGRASAS. N-linked (GlcNAc...) asparagine glycosylation is found at N8 and N25. Residues 39 to 65 traverse the membrane as a helical segment; the sequence is PALPIFSMTLGAVSNVLALALLAQAAG. At 66–75 the chain is on the cytoplasmic side; it reads RLRRRRSAAT. The helical transmembrane segment at 76–99 threads the bilayer; it reads FLLFVASLLATDLAGHVIPGALVL. At 100–114 the chain is on the extracellular side; the sequence is RLYAAGRSPAGGACH. Cysteines 113 and 191 form a disulfide. A helical membrane pass occupies residues 115 to 136; it reads FLGGCMVFFGLCPLLLGCGMAV. At 137–158 the chain is on the cytoplasmic side; sequence ERCVGVTRPLLHAARVSAARAR. The helical transmembrane segment at 159 to 180 threads the bilayer; sequence LALAVLAALALAVALLPLARVG. Residues 181-204 lie on the Extracellular side of the membrane; that stretch reads RYELQYPGTWCFIGLRPAGGWRQA. The chain crosses the membrane as a helical span at residues 205–230; the sequence is LLAGLFAGLGLAALLAALVCNTLSGL. Residues 231–295 are Cytoplasmic-facing; sequence ALLRARWRRR…ARRARAHDVE (65 aa). The interval 243 to 287 is disordered; the sequence is RRRPQACGPDGRRHWGARAPRSASASSSSSVASVPGGSPGRGSAR. A compositionally biased stretch (low complexity) spans 259-278; that stretch reads ARAPRSASASSSSSVASVPG. A helical membrane pass occupies residues 296 to 322; sequence MVGQLVGIMVVSCICWSPLLVLVVLAV. Over 323–333 the chain is Extracellular; that stretch reads GGWGSSSLQRP. A helical membrane pass occupies residues 334–355; it reads LFLAVRLASWNQILDPWVYILL. The Cytoplasmic portion of the chain corresponds to 356 to 403; sequence RQAVLRQLLRLLPPRPGAKGSPAGLALTRSAWEASSLRSSRHSSLSHL.

The protein belongs to the G-protein coupled receptor 1 family.

The protein resides in the cell membrane. Receptor for prostaglandin E2 (PGE2). The activity of this receptor is mediated by G(q) proteins which activate a phosphatidylinositol-calcium second messenger system. May play a role as an important modulator of renal function. Implicated the smooth muscle contractile response to PGE2 in various tissues. In Canis lupus familiaris (Dog), this protein is Prostaglandin E2 receptor EP1 subtype (PTGER1).